Consider the following 337-residue polypeptide: MLVLGIETSCDETGVALYDTCQGLLGHTLYSQVDMHREYGGVVPELASRDHIRRILPLIRQLFRQSDTSLESVDAIACTQGPGLAGALLTGASFSSALAFARNIPVLNIHHLEGHLLSPLLSDPAPDFPFVALLVSGGHTQLMRVDGIGQYRLLGETVDDAAGEAFDKTAKLLDLDYPGGKLLAELATQGRAEQFRLPRPMLNSNDLNFSFSGLKTAAALLIGKHEMNSQTRADIAFAFEDAVTDVLVKKSVTALNITGLQQLVVAGGVGANSRLRQKLLHHLSGTDITVFFPALEFCTDNGAMIALAGALRLQQLDERLRAGGSFTVKARWNLEDL.

Residues His111 and His115 each coordinate Fe cation. Substrate contacts are provided by residues 134–138 (LVSGG), Asp167, Gly180, and Asn272. Residue Asp300 coordinates Fe cation.

It belongs to the KAE1 / TsaD family. Fe(2+) is required as a cofactor.

It is found in the cytoplasm. The enzyme catalyses L-threonylcarbamoyladenylate + adenosine(37) in tRNA = N(6)-L-threonylcarbamoyladenosine(37) in tRNA + AMP + H(+). Functionally, required for the formation of a threonylcarbamoyl group on adenosine at position 37 (t(6)A37) in tRNAs that read codons beginning with adenine. Is involved in the transfer of the threonylcarbamoyl moiety of threonylcarbamoyl-AMP (TC-AMP) to the N6 group of A37, together with TsaE and TsaB. TsaD likely plays a direct catalytic role in this reaction. This Nitrosomonas europaea (strain ATCC 19718 / CIP 103999 / KCTC 2705 / NBRC 14298) protein is tRNA N6-adenosine threonylcarbamoyltransferase.